Consider the following 245-residue polypeptide: MMPLILLPAVDVVEGRAVRLVQGKAGSQTEYGSAVDAALGWQRDGAEWIHLVDLDAAFGRGSNHELLAEVVGKLDVQVELSGGIRDDESLAAALATGCARVNVGTAALENPQWCARVIGEHGDQVAVGLDVQIIDGEHRLRGRGWETDGGDLWDVLERLDSEGCSRFVVTDITKDGTLGGPNLDLLAGVADRTDAPVIASGGVSSLDDLRAIATLTHRGVEGAIVGKALYARRFTLPQALAAVRD.

The active-site Proton acceptor is aspartate 11. Catalysis depends on aspartate 130, which acts as the Proton donor.

The protein belongs to the HisA/HisF family.

The protein localises to the cytoplasm. The catalysed reaction is 1-(5-phospho-beta-D-ribosyl)-5-[(5-phospho-beta-D-ribosylamino)methylideneamino]imidazole-4-carboxamide = 5-[(5-phospho-1-deoxy-D-ribulos-1-ylimino)methylamino]-1-(5-phospho-beta-D-ribosyl)imidazole-4-carboxamide. It carries out the reaction N-(5-phospho-beta-D-ribosyl)anthranilate = 1-(2-carboxyphenylamino)-1-deoxy-D-ribulose 5-phosphate. It participates in amino-acid biosynthesis; L-histidine biosynthesis; L-histidine from 5-phospho-alpha-D-ribose 1-diphosphate: step 4/9. The protein operates within amino-acid biosynthesis; L-tryptophan biosynthesis; L-tryptophan from chorismate: step 3/5. Functionally, involved in both the histidine and tryptophan biosynthetic pathways. The sequence is that of Phosphoribosyl isomerase A (priA) from Mycobacterium bovis (strain ATCC BAA-935 / AF2122/97).